A 102-amino-acid chain; its full sequence is Small ribosomal subunit protein uS10 (102 aa).

It belongs to the universal ribosomal protein uS10 family. As to quaternary structure, part of the 30S ribosomal subunit.

Functionally, involved in the binding of tRNA to the ribosomes. In Agrobacterium fabrum (strain C58 / ATCC 33970) (Agrobacterium tumefaciens (strain C58)), this protein is Small ribosomal subunit protein uS10.